A 673-amino-acid polypeptide reads, in one-letter code: MSEFIRKRIRELVDLINYHDYKYYVEDNPEISDYEYDMLYRELVELEKQYPEYVFPDSPTQRVGGKVKEGFKEVVHRVPLLSLSNVFNEGELYDFDRRLKELIGTSNFDYVVEYKIDGLSVALEYENGLFIRGATRGDGNVGEDVTENLKTIRSIPLRLKEDISIVVRGEVFMPKDEFIKLNQEREENEEPLFANPRNAAAGSLRQLDPKITAQRKLDIFVFNIQWCEKELETHAQALEFLKHLGFKVSPDYVVCRDIKEAFEAIKKIEEKRDLLPFEIDGAVVKLNQLRLRDVAGETAKSPRWAVAYKFPPEKKETKLLDIEVNVGRTGILTPTAILEPVRISGSVVSRATLHNMDYIRQKDIRIGDTVIVQKAAEIIPEVVEVVFSKRTGQERIFEMPKKCPVCGADVIKFEDEVAYRCTGVECPAKSYRLILHFVSRDAMDIAGMGEMVVKTLFEKGLIKTPADIYYLKFEDLVNLERFGVKSTNNLLKAIQASKNRPLDRLIYALGIRHIGQKAAKTLAEHISSIDDLFTITEEQLLCLPDFGEKMAKSVVTFFRQEQTRHLIERLKAAGVNTVSEKKAKSDILKGYTFVLTGALSKYSRNEAKEILESLGAKVTESVSKKTTAVIVGQDPGSKFTKAQQLGVKILNEEDFEKLVKALSREEAEKILME.

NAD(+) contacts are provided by residues 33-37 (DYEYD), 82-83 (SL), and glutamate 113. The N6-AMP-lysine intermediate role is filled by lysine 115. Residues arginine 136, glutamate 170, lysine 285, and lysine 309 each coordinate NAD(+). The Zn(2+) site is built by cysteine 403, cysteine 406, cysteine 421, and cysteine 426. The 90-residue stretch at 583–672 (AKSDILKGYT…SREEAEKILM (90 aa)) folds into the BRCT domain.

This sequence belongs to the NAD-dependent DNA ligase family. LigA subfamily. Mg(2+) is required as a cofactor. Requires Mn(2+) as cofactor.

It carries out the reaction NAD(+) + (deoxyribonucleotide)n-3'-hydroxyl + 5'-phospho-(deoxyribonucleotide)m = (deoxyribonucleotide)n+m + AMP + beta-nicotinamide D-nucleotide.. In terms of biological role, DNA ligase that catalyzes the formation of phosphodiester linkages between 5'-phosphoryl and 3'-hydroxyl groups in double-stranded DNA using NAD as a coenzyme and as the energy source for the reaction. It is essential for DNA replication and repair of damaged DNA. This is DNA ligase from Caldicellulosiruptor bescii (strain ATCC BAA-1888 / DSM 6725 / KCTC 15123 / Z-1320) (Anaerocellum thermophilum).